Consider the following 116-residue polypeptide: uncharacterized protein (116 aa).

The VOC domain occupies 5 to 113 (EVKMVVLSTE…TGNGLVFYSP (109 aa)). Lys-76 participates in a covalent cross-link: Isoglutamyl lysine isopeptide (Lys-Gln) (interchain with Q-Cter in protein Pup).

This is an uncharacterized protein from Mycolicibacterium smegmatis (strain ATCC 700084 / mc(2)155) (Mycobacterium smegmatis).